The following is a 188-amino-acid chain: Elongation factor P (188 aa).

Lysine 34 carries the N6-(3,6-diaminohexanoyl)-5-hydroxylysine modification.

It belongs to the elongation factor P family. In terms of processing, may be beta-lysylated on the epsilon-amino group of Lys-34 by the combined action of EpmA and EpmB, and then hydroxylated on the C5 position of the same residue by EpmC (if this protein is present). Lysylation is critical for the stimulatory effect of EF-P on peptide-bond formation. The lysylation moiety may extend toward the peptidyltransferase center and stabilize the terminal 3-CCA end of the tRNA. Hydroxylation of the C5 position on Lys-34 may allow additional potential stabilizing hydrogen-bond interactions with the P-tRNA.

The protein localises to the cytoplasm. It functions in the pathway protein biosynthesis; polypeptide chain elongation. In terms of biological role, involved in peptide bond synthesis. Alleviates ribosome stalling that occurs when 3 or more consecutive Pro residues or the sequence PPG is present in a protein, possibly by augmenting the peptidyl transferase activity of the ribosome. Modification of Lys-34 is required for alleviation. This Yersinia pseudotuberculosis serotype O:1b (strain IP 31758) protein is Elongation factor P.